Consider the following 539-residue polypeptide: Acid-sensing ion channel 4 (539 aa).

At Met-1 to Thr-68 the chain is on the cytoplasmic side. Residues Leu-69–Ala-89 form a helical membrane-spanning segment. Over Arg-90–Ala-438 the chain is Extracellular. Cystine bridges form between Cys-118–Cys-202 and Cys-180–Cys-187. N-linked (GlcNAc...) asparagine glycans are attached at residues Asn-191, Asn-243, Asn-341, and Asn-376. 5 cysteine pairs are disulfide-bonded: Cys-296/Cys-375, Cys-318/Cys-371, Cys-322/Cys-369, Cys-331/Cys-353, and Cys-333/Cys-345. The chain crosses the membrane as a helical span at residues Leu-439–Leu-459. Residues Gly-452 to Ser-454 carry the GAS motif; ion selectivity filter motif. At Glu-460–Cys-539 the chain is on the cytoplasmic side. Positions Glu-501 to Gly-531 are disordered.

The protein belongs to the amiloride-sensitive sodium channel (TC 1.A.6) family. ASIC4 subfamily. As to quaternary structure, homotrimer. Heterotrimer; with other ASIC proteins producing functional channels. Expressed in brain, spinal cord and dorsal root ganglion (DRG). Expressed by a subset of sensory neurons in the DRG. Expressed by granule cells in the cerebellar cortex. In hippocampus, expression is detected in dentate gyrus granule cells, in pyramidal cells of CA1-CA3 subfields and in interneurons of the striatum oriens and radiatum of all subfields. In cerebral cortex expressed in small, medium and large pyramidal cells in layers 2, 3 and 5 respectively. Also expressed in striatum, globus pallidus, inferior and superior calliculi, amygdala, magnocellular preoptic nucleus, islands of Calleja and large neurons of olfactory tubercules.

It is found in the cell membrane. Its function is as follows. Does not exhibit measurable stand-alone pH-gated sodium channel activity but may form pH-gated heterotrimeric sodium channels. Its activity could also depend on alternative gating mechanisms. The protein is Acid-sensing ion channel 4 of Rattus norvegicus (Rat).